The chain runs to 45 residues: Defensin Tk-AMP-D3 (45 aa).

Intrachain disulfides connect Cys3–Cys45, Cys14–Cys34, Cys20–Cys39, and Cys24–Cys41.

Functionally, plant defense peptide. In Triticum kiharae (Wheat), this protein is Defensin Tk-AMP-D3.